We begin with the raw amino-acid sequence, 33 residues long: Helofensin-1 (33 aa).

The protein belongs to the beta-defensin family. Helofensin subfamily. Expressed by the venom gland.

It localises to the secreted. Functionally, lethal toxin which possesses an inhibitory effect on direct electrical stimulation of the isolated hemi-diaphragm. Neither hemorrhagic nor hemolytic activities are detected. Phospholipase A2 activity, proteolytic activity and arginine esterolytic activity are absent. This chain is Helofensin-1, found in Heloderma horridum horridum (Mexican beaded lizard).